We begin with the raw amino-acid sequence, 202 residues long: Small ribosomal subunit protein uS4c (202 aa).

The 64-residue stretch at 90–153 (MRLDNVIFRL…KSETIISKNI (64 aa)) folds into the S4 RNA-binding domain.

This sequence belongs to the universal ribosomal protein uS4 family. As to quaternary structure, part of the 30S ribosomal subunit. Contacts protein S5. The interaction surface between S4 and S5 is involved in control of translational fidelity.

It localises to the plastid. The protein localises to the chloroplast. Functionally, one of the primary rRNA binding proteins, it binds directly to 16S rRNA where it nucleates assembly of the body of the 30S subunit. With S5 and S12 plays an important role in translational accuracy. In Arbusculohypopterygium arbuscula (Moss), this protein is Small ribosomal subunit protein uS4c (rps4).